The chain runs to 1218 residues: MYIEEIILDGFKSYPTKTVIGPFHPQFNAITGLNGSGKSNVLDAICFVMGINNLNLIRVNRLDELIYKQGQAGITKGSVTIKFNNEEKPSPLQEPYRDMKNITITRQIVLGGRNRYLLNSHNAKPKDISDFFQSLKLNINNPHFLIMQGKITKVINMKPIELLGLIEESSGTKLYEVKRTNAIKLMVKKDQKLGEINKVLFEEIEPTLVKLKKEKEEYNKFVSNNEEIEKYEKVEIAYKYYVAKKMMTKCEEKIEDAKSEEKILEKGIKEIDKDIEKYKIEKEKIVKETNTASEPMKILISQKEELEKKISQLKSEAKMENKEKAKEKRRREDIKKEINNLQNKLDDYQKNNEKNNKNLKSYEDLKKKIEILKEELNEKQLTMNCLLSAGTNNNEYTGSFREQLKNYKTNLSKAETQINNFLQNNKHLEKEIMTLKEQRKKYEKEYNEISKEKDIEEKKKKLCEQELDKLNKEYNNFMELDTLKTDKNILYNDMEKLQQELQVLKNIINSVKIDYKIPSNMKSTDVLGQIYKLIKIKKEYINTALAVHLILGGKLTYLLVQNKEHSKRLFEYNNFSSGSKRVTLLPLEDCVISREVHEKHIEECRRNVGLNIKDKNDVIYFLDIMEYDKNLERIIQYLFNGTLICSNVDLCKKITYNPNKKLSYTTITLEGDKFDTSGSMSGGSNKNINLFLLNYEKYKHKKEQYHDNENKLKEVSEKLKSLEKAEEKKKIISKELQIYENNLNNIENRMETSKYGSVNKKIEEHKNEIDKGRNELSELYKEQKKLTEVIRKLEKDISEYEANKDKKEEDLKETIKKLKNKIKQLETEEHKKKEEIDDVLLQIENYKKQKEKETNDLSSTDEIINEIEKKIEDIEKNINITKENLKELENKITELQSSFSSYENEMKHVVKKIEDLEKKKSENILDLKKLENTLLDLQKDLKTSSDTVKYLYKTHVWIESYEPLFNKKYTPYDFENFRHDVIQKKIQALQNEQNKLSININRKAVQMYEQVQVDYKDLVTKKSQVEEDKKKIQEVIADLDVKKSESLLAMYQQINEYFQAIFSTLLNNAQAKLSIVDGDLANGIEMKIAFNNNWKESLTELSGGQRSLLALSLILALLKVRTVPMYILDEIDAALDLNHTQNIGDMIRTQFPHSQFIIVSLKEGMFSHADVLFKMRFIDGISTVNRHALDIRQNTNKKEVQEVKRRRVTIHDKEPDHD.

ATP is bound at residue Gly-32–Ser-39. Positions Val-209 to Ile-517 form a coiled coil. Residues Asp-525–Ile-654 enclose the SMC hinge domain. Coiled-coil stretches lie at residues Leu-693 to Lys-949 and Arg-978 to Glu-1045.

The protein belongs to the SMC family. SMC2 subfamily.

It is found in the nucleus. Functionally, may play a role in the conversion of interphase chromatin into condensed chromosomes. This is Structural maintenance of chromosomes protein 2 from Plasmodium falciparum (isolate 3D7).